A 350-amino-acid polypeptide reads, in one-letter code: Putative ATP-binding protein BRA0745/BS1330_II0738 (350 aa).

The ABC transporter domain occupies 4–234 (VSLRGISKTF…PANKFVAGFI (231 aa)). 36–43 (GPSGCGKS) provides a ligand contact to ATP.

Belongs to the ABC transporter superfamily. The complex is composed of two ATP-binding proteins (BRA0745), two transmembrane proteins (BRA0749) and a solute-binding protein (BRA0748).

The protein resides in the cell inner membrane. In terms of biological role, probably part of an ABC transporter complex. Probably responsible for energy coupling to the transport system. This is Putative ATP-binding protein BRA0745/BS1330_II0738 from Brucella suis biovar 1 (strain 1330).